A 231-amino-acid polypeptide reads, in one-letter code: Large ribosomal subunit protein uL1 (231 aa).

Belongs to the universal ribosomal protein uL1 family. Part of the 50S ribosomal subunit.

Binds directly to 23S rRNA. The L1 stalk is quite mobile in the ribosome, and is involved in E site tRNA release. Functionally, protein L1 is also a translational repressor protein, it controls the translation of the L11 operon by binding to its mRNA. The chain is Large ribosomal subunit protein uL1 from Nitrosomonas eutropha (strain DSM 101675 / C91 / Nm57).